Here is a 405-residue protein sequence, read N- to C-terminus: Phosphoglycerate kinase (405 aa).

Residues 21–23 (DFN), arginine 36, 59–62 (HLGR), arginine 119, and arginine 161 each bind substrate. ATP contacts are provided by residues lysine 212, glycine 301, glutamate 332, and 361 to 364 (GGDS).

Belongs to the phosphoglycerate kinase family. In terms of assembly, monomer.

The protein localises to the cytoplasm. The enzyme catalyses (2R)-3-phosphoglycerate + ATP = (2R)-3-phospho-glyceroyl phosphate + ADP. Its pathway is carbohydrate degradation; glycolysis; pyruvate from D-glyceraldehyde 3-phosphate: step 2/5. The protein is Phosphoglycerate kinase of Leuconostoc citreum (strain KM20).